Reading from the N-terminus, the 349-residue chain is Micronemal protein 6 (349 aa).

The N-terminal stretch at 1 to 23 (MRLFRCCAAAVVAAESLLWLKNG) is a signal peptide. EGF-like domains lie at 36-80 (IADN…VTCM), 96-134 (TPAACSSNPCGPEAAGTCKETNSGYICRCNQGYRISLDG), and 147-192 (GCEE…ITCK). Cystine bridges form between cysteine 40–cysteine 53, cysteine 45–cysteine 62, cysteine 64–cysteine 79, cysteine 100–cysteine 113, cysteine 105–cysteine 122, cysteine 124–cysteine 140, cysteine 148–cysteine 162, cysteine 153–cysteine 173, and cysteine 175–cysteine 191. Residues 194-291 (VPPHYRKPPF…EEGSGHAGAI (98 aa)) form a disordered region. Residues 204 to 283 (EFGKGGHPVD…SEEQGKEREE (80 aa)) are acidic domain. 2 stretches are compositionally biased toward basic and acidic residues: residues 210–247 (HPVDSEPSKRQREDEGESREPESDSTEPGRDQERRTPL) and 276–285 (EQGKEREEGS). Residues 290 to 310 (AIAGGVIGGLLLLSAAGAGVA) traverse the membrane as a helical segment.

Interacts directly with MIC1. Part of the MIC6-MIC1-MIC4 complex. In terms of processing, subject to proteolytic processing involving both the N-terminus and the C-terminus. The first EGF-like domain (EGF-like domain 1) is removed by proteolytic cleavage by ASP3 and is not present in the mature protein. Released as soluble 35 kDa protein after proteolytic processing at the C-terminus.

Its subcellular location is the cytoplasmic vesicle. The protein localises to the secretory vesicle. It localises to the microneme membrane. It is found in the secreted. In terms of biological role, escorter protein required for import of MIC1 and MIC4 adhesins into the microneme. This is Micronemal protein 6 from Toxoplasma gondii.